A 201-amino-acid polypeptide reads, in one-letter code: Ribonuclease HII (201 aa).

Residues 11–201 (LRECGCDEAG…VVDADRPTTE (191 aa)) enclose the RNase H type-2 domain. A divalent metal cation-binding residues include Asp17, Glu18, and Asp109.

Belongs to the RNase HII family. The cofactor is Mn(2+). Requires Mg(2+) as cofactor.

It is found in the cytoplasm. The enzyme catalyses Endonucleolytic cleavage to 5'-phosphomonoester.. Functionally, endonuclease that specifically degrades the RNA of RNA-DNA hybrids. This is Ribonuclease HII (rnhB) from Porphyromonas gingivalis (strain ATCC BAA-308 / W83).